The chain runs to 101 residues: Eukaryotic translation initiation factor 4E-binding protein 3 (101 aa).

The interval 1–28 (MSSSTSCPIPGCRDQLPDGYSTTPGGTL) is disordered. The YXXXXLphi motif motif lies at 40–46 (YDRKFLL). Residues 97–101 (FEMDM) carry the TOS motif motif.

It belongs to the eIF4E-binding protein family. Interacts with EIF4E. Interacts with RPA2 (via N-terminus); the interaction enhances EIF4EBP3-mediated inhibition of EIF4E-mediated mRNA nuclear export. Post-translationally, phosphorylated.

The protein resides in the cytoplasm. The protein localises to the nucleus. In terms of biological role, repressor of translation initiation that regulates EIF4E activity by preventing its assembly into the eIF4F complex: the hypophosphorylated form competes with EIF4G1/EIF4G3 and strongly binds to EIF4E, leading to repression of translation. In contrast, the hyperphosphorylated form dissociates from EIF4E, allowing interaction between EIF4G1/EIF4G3 and EIF4E, leading to initiation of translation. Inhibits EIF4E-mediated mRNA nuclear export. In Mus musculus (Mouse), this protein is Eukaryotic translation initiation factor 4E-binding protein 3 (Eif4ebp3).